The sequence spans 199 residues: 7-methyl-GTP pyrophosphatase (199 aa).

Catalysis depends on Asp-73, which acts as the Proton acceptor.

The protein belongs to the Maf family. YceF subfamily. A divalent metal cation serves as cofactor.

Its subcellular location is the cytoplasm. The enzyme catalyses N(7)-methyl-GTP + H2O = N(7)-methyl-GMP + diphosphate + H(+). Functionally, nucleoside triphosphate pyrophosphatase that hydrolyzes 7-methyl-GTP (m(7)GTP). May have a dual role in cell division arrest and in preventing the incorporation of modified nucleotides into cellular nucleic acids. This is 7-methyl-GTP pyrophosphatase from Bordetella bronchiseptica (strain ATCC BAA-588 / NCTC 13252 / RB50) (Alcaligenes bronchisepticus).